A 787-amino-acid chain; its full sequence is DNA ligase (787 aa).

Residues 32 to 36, 81 to 82, and E121 each bind NAD(+); these read DVEYD and SL. K123 serves as the catalytic N6-AMP-lysine intermediate. NAD(+)-binding residues include R144, E181, K297, and K321. Zn(2+) is bound by residues C415, C418, C445, and C451. The BRCT domain maps to 703–787; that stretch reads VEGLPLAGQT…RLTELGVAVD (85 aa).

The protein belongs to the NAD-dependent DNA ligase family. LigA subfamily. Mg(2+) is required as a cofactor. The cofactor is Mn(2+).

It carries out the reaction NAD(+) + (deoxyribonucleotide)n-3'-hydroxyl + 5'-phospho-(deoxyribonucleotide)m = (deoxyribonucleotide)n+m + AMP + beta-nicotinamide D-nucleotide.. Functionally, DNA ligase that catalyzes the formation of phosphodiester linkages between 5'-phosphoryl and 3'-hydroxyl groups in double-stranded DNA using NAD as a coenzyme and as the energy source for the reaction. It is essential for DNA replication and repair of damaged DNA. This Pseudomonas savastanoi pv. phaseolicola (strain 1448A / Race 6) (Pseudomonas syringae pv. phaseolicola (strain 1448A / Race 6)) protein is DNA ligase.